Reading from the N-terminus, the 370-residue chain is MAVKVLVVDDSGFFRRRVSEILSADPTIQVVGTATNGKEAIDQALALKPDVITMDYEMPMMDGITAVRHIMQRCPTPVLMFSSLTHEGARVTLDALDAGAVDYLPKNFEDISRNPDKVKQLLCEKVHTISRSNRRIGSYARTAPVAAPAPASTFTSQAQTRPAAPARAAAPTPAASQSPAPKRKPYKLVAIGTSTGGPVALQRVLTQLPANFPAPIVLIQHMPAAFTKAFAERLDKLCRISVKEAEDGDMLRPGLALLAPGGKQMMIDGRGTVKILPGDERLNYKPCVDITFGSAAKSYGDKVLSVVLTGMGADGREGARLLKQGGSTVWAQDEASCVIYGMPMAIVKANLADAVYSLDEIGKHLVEACV.

Positions 4–121 (KVLVVDDSGF…SRNPDKVKQL (118 aa)) constitute a Response regulatory domain. Asp-55 is modified (4-aspartylphosphate). Residues 150 to 180 (PASTFTSQAQTRPAAPARAAAPTPAASQSPA) are compositionally biased toward low complexity. A disordered region spans residues 150–183 (PASTFTSQAQTRPAAPARAAAPTPAASQSPAPKR). Residues 179-370 (PAPKRKPYKL…IGKHLVEACV (192 aa)) enclose the CheB-type methylesterase domain. Residues Ser-194, His-221, and Asp-314 contribute to the active site.

Belongs to the CheB family. In terms of processing, phosphorylated by CheA. Phosphorylation of the N-terminal regulatory domain activates the methylesterase activity.

It is found in the cytoplasm. It carries out the reaction [protein]-L-glutamate 5-O-methyl ester + H2O = L-glutamyl-[protein] + methanol + H(+). It catalyses the reaction L-glutaminyl-[protein] + H2O = L-glutamyl-[protein] + NH4(+). Its function is as follows. Involved in chemotaxis. Part of a chemotaxis signal transduction system that modulates chemotaxis in response to various stimuli. Catalyzes the demethylation of specific methylglutamate residues introduced into the chemoreceptors (methyl-accepting chemotaxis proteins or MCP) by CheR. Also mediates the irreversible deamidation of specific glutamine residues to glutamic acid. The protein is Protein-glutamate methylesterase/protein-glutamine glutaminase of group 1 operon of Pseudomonas putida (strain ATCC 47054 / DSM 6125 / CFBP 8728 / NCIMB 11950 / KT2440).